The chain runs to 379 residues: Cytochrome b (379 aa).

The next 4 membrane-spanning stretches (helical) occupy residues 34–54 (FGSL…LLAM), 78–99 (WLIR…YLHI), 114–134 (WNTG…GYVL), and 179–199 (FFAL…IHLT). The heme b site is built by His-84 and His-98. Heme b-binding residues include His-183 and His-197. Residue His-202 participates in a ubiquinone binding. A run of 4 helical transmembrane segments spans residues 227-247 (LKDI…AFFS), 289-309 (LGGV…PFLH), 321-341 (LSQV…WIGS), and 348-368 (FIII…ILFP).

This sequence belongs to the cytochrome b family. The cytochrome bc1 complex contains 11 subunits: 3 respiratory subunits (MT-CYB, CYC1 and UQCRFS1), 2 core proteins (UQCRC1 and UQCRC2) and 6 low-molecular weight proteins (UQCRH/QCR6, UQCRB/QCR7, UQCRQ/QCR8, UQCR10/QCR9, UQCR11/QCR10 and a cleavage product of UQCRFS1). This cytochrome bc1 complex then forms a dimer. Heme b serves as cofactor.

The protein localises to the mitochondrion inner membrane. Functionally, component of the ubiquinol-cytochrome c reductase complex (complex III or cytochrome b-c1 complex) that is part of the mitochondrial respiratory chain. The b-c1 complex mediates electron transfer from ubiquinol to cytochrome c. Contributes to the generation of a proton gradient across the mitochondrial membrane that is then used for ATP synthesis. This is Cytochrome b (MT-CYB) from Casuarius bennetti (Dwarf cassowary).